Consider the following 363-residue polypeptide: Peptide chain release factor 1 (363 aa).

N5-methylglutamine is present on Gln-237. Basic and acidic residues predominate over residues 284–297; the sequence is ERAKQQSERSEQRR. A disordered region spans residues 284 to 306; it reads ERAKQQSERSEQRRLAVGSGDRS.

The protein belongs to the prokaryotic/mitochondrial release factor family. Methylated by PrmC. Methylation increases the termination efficiency of RF1.

Its subcellular location is the cytoplasm. Peptide chain release factor 1 directs the termination of translation in response to the peptide chain termination codons UAG and UAA. The polypeptide is Peptide chain release factor 1 (Halorhodospira halophila (strain DSM 244 / SL1) (Ectothiorhodospira halophila (strain DSM 244 / SL1))).